A 137-amino-acid polypeptide reads, in one-letter code: Methylglyoxal synthase (137 aa).

The MGS-like domain occupies Met1–Val137. Residues His8, Lys12, Thr34–Thr37, and Ser54–Gly55 each bind substrate. Asp60 (proton donor/acceptor) is an active-site residue. His87 provides a ligand contact to substrate.

Belongs to the methylglyoxal synthase family.

The enzyme catalyses dihydroxyacetone phosphate = methylglyoxal + phosphate. Functionally, catalyzes the formation of methylglyoxal from dihydroxyacetone phosphate. This chain is Methylglyoxal synthase, found in Bacillus subtilis (strain 168).